A 471-amino-acid polypeptide reads, in one-letter code: Venom prothrombin activator vestarin-D2 (471 aa).

A signal peptide spans 1-20; that stretch reads MAPQLLLCLILTFLWSLPEA. A propeptide spanning residues 21–40 is cleaved from the precursor; sequence ESNVFLKSNVANRFLQRTKR. Residues 41–86 enclose the Gla domain; sequence ANSIFEEIRPGNIERECVEEKCSKEEAREVFQDNEKTEAFWTVYVD. 10 positions are modified to 4-carboxyglutamate: Glu46, Glu47, Glu54, Glu56, Glu59, Glu60, Glu65, Glu66, Glu69, and Glu75. Cys57 and Cys62 are disulfide-bonded. Residues 86 to 122 form the EGF-like 1; calcium-binding domain; sequence DGDQCLSNPCHYRGTCKDGIGSYTCTCLPGYEGKNCE. 10 disulfides stabilise this stretch: Cys90-Cys101, Cys95-Cys110, Cys112-Cys121, Cys129-Cys140, Cys136-Cys149, Cys151-Cys164, Cys172-Cys333, Cys233-Cys238, Cys381-Cys395, and Cys406-Cys434. The O-linked (Hex...) serine glycan is linked to Ser92. The EGF-like 2 domain maps to 129 to 164; that stretch reads CRLFNGNCWHFCKTVQNDTQCSCAEGYRLGVDGFSC. Positions 182–226 are cleaved as a propeptide — activation peptide; sequence REASLPDFHFSDDYDAIDENNLVETVQSQSATLLKKSDNPSPDIR. A Peptidase S1 domain is found at 227 to 458; sequence IVSGLDCKLG…FIPWIKTIMR (232 aa). His268 functions as the Charge relay system in the catalytic mechanism. Asn271 carries an N-linked (GlcNAc...) asparagine glycan. Asp313 acts as the Charge relay system in catalysis. The active-site Charge relay system is Ser410.

This sequence belongs to the peptidase S1 family. Snake venom subfamily. In terms of assembly, heterodimer of a light chain and a heavy chain; disulfide-linked. In terms of processing, the vitamin K-dependent, enzymatic carboxylation of some glutamate residues allows the modified protein to bind calcium. Expressed by the venom gland.

The protein resides in the secreted. It carries out the reaction Selective cleavage of Arg-|-Thr and then Arg-|-Ile bonds in prothrombin to form thrombin.. In terms of biological role, snake prothrombin activator that attacks the hemostatic system of prey. This protein is functionally similar to blood coagulation factor Xa. This chain is Venom prothrombin activator vestarin-D2, found in Demansia vestigiata (Lesser black whip snake).